Consider the following 93-residue polypeptide: Cell division protein CrgA (93 aa).

Transmembrane regions (helical) follow at residues 31-51 and 70-90; these read VWFVALFIGLMLIGLVWLMVF and LGPWNYAIAFAFMITGLLLTM.

It belongs to the CrgA family.

The protein localises to the cell membrane. In terms of biological role, involved in cell division. The sequence is that of Cell division protein CrgA from Mycobacterium marinum (strain ATCC BAA-535 / M).